The primary structure comprises 139 residues: Large ribosomal subunit protein bL17 (139 aa).

The protein belongs to the bacterial ribosomal protein bL17 family. As to quaternary structure, part of the 50S ribosomal subunit. Contacts protein L32.

This chain is Large ribosomal subunit protein bL17, found in Azorhizobium caulinodans (strain ATCC 43989 / DSM 5975 / JCM 20966 / LMG 6465 / NBRC 14845 / NCIMB 13405 / ORS 571).